Here is a 462-residue protein sequence, read N- to C-terminus: L-seryl-tRNA(Sec) selenium transferase (462 aa).

Lysine 293 is modified (N6-(pyridoxal phosphate)lysine).

This sequence belongs to the SelA family. It depends on pyridoxal 5'-phosphate as a cofactor.

The protein resides in the cytoplasm. The catalysed reaction is L-seryl-tRNA(Sec) + selenophosphate + H(+) = L-selenocysteinyl-tRNA(Sec) + phosphate. The protein operates within aminoacyl-tRNA biosynthesis; selenocysteinyl-tRNA(Sec) biosynthesis; selenocysteinyl-tRNA(Sec) from L-seryl-tRNA(Sec) (bacterial route): step 1/1. Functionally, converts seryl-tRNA(Sec) to selenocysteinyl-tRNA(Sec) required for selenoprotein biosynthesis. The sequence is that of L-seryl-tRNA(Sec) selenium transferase from Clostridium botulinum (strain ATCC 19397 / Type A).